The chain runs to 80 residues: Cytochrome c oxidase subunit 7B, mitochondrial (80 aa).

Residues 1-24 constitute a mitochondrion transit peptide; the sequence is MFPLVKSALNRLQVRSIQQTMARQ. Residues 25 to 32 lie on the Mitochondrial matrix side of the membrane; the sequence is SHQKRTPD. The chain crosses the membrane as a helical span at residues 33-59; it reads FHDKYGNAVLASGATFCIVTWTYVATQ. Residues 60–80 are Mitochondrial intermembrane-facing; the sequence is VGIEWNLSPVGRVTPKEWRNQ.

It belongs to the cytochrome c oxidase VIIb family. As to quaternary structure, component of the cytochrome c oxidase (complex IV, CIV), a multisubunit enzyme composed of 14 subunits. The complex is composed of a catalytic core of 3 subunits MT-CO1, MT-CO2 and MT-CO3, encoded in the mitochondrial DNA, and 11 supernumerary subunits COX4I1 (or COX4I2), COX5A, COX5B, COX6A1 (or COX6A2), COX6B1 (or COX6B2), COX6C, COX7A2 (or COX7A1), COX7B, COX7C, COX8A and NDUFA4, which are encoded in the nuclear genome. The complex exists as a monomer or a dimer and forms supercomplexes (SCs) in the inner mitochondrial membrane with NADH-ubiquinone oxidoreductase (complex I, CI) and ubiquinol-cytochrome c oxidoreductase (cytochrome b-c1 complex, complex III, CIII), resulting in different assemblies (supercomplex SCI(1)III(2)IV(1) and megacomplex MCI(2)III(2)IV(2)).

It is found in the mitochondrion inner membrane. The protein operates within energy metabolism; oxidative phosphorylation. Component of the cytochrome c oxidase, the last enzyme in the mitochondrial electron transport chain which drives oxidative phosphorylation. The respiratory chain contains 3 multisubunit complexes succinate dehydrogenase (complex II, CII), ubiquinol-cytochrome c oxidoreductase (cytochrome b-c1 complex, complex III, CIII) and cytochrome c oxidase (complex IV, CIV), that cooperate to transfer electrons derived from NADH and succinate to molecular oxygen, creating an electrochemical gradient over the inner membrane that drives transmembrane transport and the ATP synthase. Cytochrome c oxidase is the component of the respiratory chain that catalyzes the reduction of oxygen to water. Electrons originating from reduced cytochrome c in the intermembrane space (IMS) are transferred via the dinuclear copper A center (CU(A)) of subunit 2 and heme A of subunit 1 to the active site in subunit 1, a binuclear center (BNC) formed by heme A3 and copper B (CU(B)). The BNC reduces molecular oxygen to 2 water molecules using 4 electrons from cytochrome c in the IMS and 4 protons from the mitochondrial matrix. Plays a role in proper central nervous system (CNS) development in vertebrates. This is Cytochrome c oxidase subunit 7B, mitochondrial (COX7B) from Homo sapiens (Human).